The chain runs to 372 residues: Pyruvylated Gal-beta-1,3-epitope synthesis protein 5 (372 aa).

Topologically, residues 1-12 are cytoplasmic; sequence MGLPLRIFAGNG. The helical; Signal-anchor for type II membrane protein transmembrane segment at 13–35 threads the bilayer; sequence IGGWCLRLFLFGSLILLLRPLIF. At 36 to 372 the chain is on the lumenal side; that stretch reads YSNTTMKKLK…LRIIEQWKQL (337 aa). Asn-38 and Asn-128 each carry an N-linked (GlcNAc...) asparagine glycan.

The protein localises to the golgi apparatus membrane. Functionally, involved in cell wall biogenesis. Has a role in the addition of Gal-beta1,3 moeities to galactomannans and their subsequent pyruvylation. Has a role in meiosis. This chain is Pyruvylated Gal-beta-1,3-epitope synthesis protein 5 (pvg5), found in Schizosaccharomyces pombe (strain 972 / ATCC 24843) (Fission yeast).